Here is a 341-residue protein sequence, read N- to C-terminus: Sulfate/thiosulfate import ATP-binding protein CysA 2 (341 aa).

The 233-residue stretch at 3–235 folds into the ABC transporter domain; it reads IRLENVVKTF…PNSSFVMRFL (233 aa). 35–42 lines the ATP pocket; sequence GPSGSGKT.

The protein belongs to the ABC transporter superfamily. Sulfate/tungstate importer (TC 3.A.1.6) family. In terms of assembly, the complex is composed of two ATP-binding proteins (CysA), two transmembrane proteins (CysT and CysW) and a solute-binding protein (CysP).

It is found in the cell inner membrane. The catalysed reaction is sulfate(out) + ATP + H2O = sulfate(in) + ADP + phosphate + H(+). It carries out the reaction thiosulfate(out) + ATP + H2O = thiosulfate(in) + ADP + phosphate + H(+). Its function is as follows. Part of the ABC transporter complex CysAWTP involved in sulfate/thiosulfate import. Responsible for energy coupling to the transport system. The sequence is that of Sulfate/thiosulfate import ATP-binding protein CysA 2 from Agrobacterium fabrum (strain C58 / ATCC 33970) (Agrobacterium tumefaciens (strain C58)).